Consider the following 431-residue polypeptide: MAVGAAAVTEVGDTASPVGSSGASGGAIASGSVARVGTAAAVTALCGYAVIYLAARNLAPNGFSVFGVFWGAFGLVTGAANGLLQETTREVRSLGYLDVSADGRRTHPLRVSGMVGLGSLVVIAGSSPLWSGRVFAEARWLSVALLSIGLAGFCLHATLLGMLAGTNRWTQYGALMVADAVIRVVVAAATFVIGWQLVGFIWATVAGSVAWLIMLMTSPPTRAAARLMTPGATATFLRGAAHSIIAAGASAILVMGFPVLLKLTSNELGAQGGVVILAVTLTRAPLLVPLTAMQGNLIAHFVDERTERIRALIAPAALIGGVGAVGMLAAGVVGPWIMRVAFGSEYQSSSALLAWLTAAAVAIAMLTLTGAAAVAAALHRAYSLGWVGATVGSGLLLLLPLSLETRTVVALLCGPLVGIGVHLVALARTDE.

The next 12 helical transmembrane spans lie at 33–53, 63–83, 111–131, 143–163, 175–195, 197–217, 241–261, 273–293, 318–338, 358–378, 381–401, and 407–427; these read VARV…VIYL, FSVF…ANGL, VSGM…PLWS, VALL…LGML, LMVA…VIGW, LVGF…MLMT, AHSI…PVLL, GVVI…LTAM, LIGG…PWIM, AAAV…AAAL, AYSL…LLPL, and TVVA…VALA.

To M.tuberculosis Rv1510 and M.bovis Mb3654.

The protein resides in the cell membrane. This is an uncharacterized protein from Mycobacterium tuberculosis (strain ATCC 25618 / H37Rv).